A 182-amino-acid polypeptide reads, in one-letter code: Isopentenyl-diphosphate Delta-isomerase (182 aa).

Mn(2+) is bound by residues H25 and H32. The Nudix hydrolase domain occupies 30 to 164 (PLHLAFSCWL…PWAFSPWMVM (135 aa)). C67 is a catalytic residue. H69 contacts Mn(2+). Position 87 (E87) interacts with Mg(2+). Mn(2+) contacts are provided by E114 and E116. The active site involves E116.

It belongs to the IPP isomerase type 1 family. As to quaternary structure, homodimer. Mg(2+) is required as a cofactor. The cofactor is Mn(2+).

It is found in the cytoplasm. The enzyme catalyses isopentenyl diphosphate = dimethylallyl diphosphate. It functions in the pathway isoprenoid biosynthesis; dimethylallyl diphosphate biosynthesis; dimethylallyl diphosphate from isopentenyl diphosphate: step 1/1. Catalyzes the 1,3-allylic rearrangement of the homoallylic substrate isopentenyl (IPP) to its highly electrophilic allylic isomer, dimethylallyl diphosphate (DMAPP). The chain is Isopentenyl-diphosphate Delta-isomerase from Salmonella arizonae (strain ATCC BAA-731 / CDC346-86 / RSK2980).